The primary structure comprises 224 residues: 7-cyano-7-deazaguanine synthase (224 aa).

9 to 19 contacts ATP; that stretch reads ISGGMDSTLCA. Zn(2+) contacts are provided by Cys-190, Cys-198, Cys-201, and Cys-204.

This sequence belongs to the QueC family. It depends on Zn(2+) as a cofactor.

The enzyme catalyses 7-carboxy-7-deazaguanine + NH4(+) + ATP = 7-cyano-7-deazaguanine + ADP + phosphate + H2O + H(+). It participates in purine metabolism; 7-cyano-7-deazaguanine biosynthesis. Its function is as follows. Catalyzes the ATP-dependent conversion of 7-carboxy-7-deazaguanine (CDG) to 7-cyano-7-deazaguanine (preQ(0)). This is 7-cyano-7-deazaguanine synthase from Campylobacter jejuni subsp. doylei (strain ATCC BAA-1458 / RM4099 / 269.97).